The primary structure comprises 117 residues: Holo-[acyl-carrier-protein] synthase (117 aa).

Mg(2+) contacts are provided by D8 and E58.

It belongs to the P-Pant transferase superfamily. AcpS family. Requires Mg(2+) as cofactor.

The protein localises to the cytoplasm. It catalyses the reaction apo-[ACP] + CoA = holo-[ACP] + adenosine 3',5'-bisphosphate + H(+). Transfers the 4'-phosphopantetheine moiety from coenzyme A to a Ser of acyl-carrier-protein. The polypeptide is Holo-[acyl-carrier-protein] synthase (Shouchella clausii (strain KSM-K16) (Alkalihalobacillus clausii)).